The chain runs to 402 residues: MNVLVINSGSSSIKYQLIDMEREVPLCSGLVERIGEPMGKLTHKIRPDAEGEEKLTFEQPFTNHVEGMKRVVELITDADKGVIKDKSEIGAIGHRVLLGGEEIKQSVRIDDWAKGVIRDYIPLGPLHNPANLAGIEVAEELFPGLPNVGVFDTEFHQSMPAKAYLYPLPIELYEELKIRRYGFHGTSHRYITKRTAQYLGKPLDELNIITCHLGNGCSMAAVKNGKCVDTTMGITPLEGLMMGTRCGDIDPAIVPFLMEKKNLSPAEADTLMNKQSGLKGVCGMNDMRDLHAARENGNERAQLAFEMFTYRIKKYIGAYYAVLGRVDAVVFTAGIGENDDFVRAEVCAGLDSLGIAVDPARNAVRNGQPRHISPDGSRVAVLVVPTNEELEIAQATLDVLKG.

Asn7 serves as a coordination point for Mg(2+). An ATP-binding site is contributed by Lys14. Arg95 lines the substrate pocket. Asp152 (proton donor/acceptor) is an active-site residue. Residues 212–216 (HLGNG), 286–288 (DMR), and 334–338 (GIGEN) each bind ATP. Position 388 (Glu388) interacts with Mg(2+).

This sequence belongs to the acetokinase family. In terms of assembly, homodimer. Requires Mg(2+) as cofactor. Mn(2+) serves as cofactor.

The protein resides in the cytoplasm. It carries out the reaction acetate + ATP = acetyl phosphate + ADP. It participates in metabolic intermediate biosynthesis; acetyl-CoA biosynthesis; acetyl-CoA from acetate: step 1/2. Catalyzes the formation of acetyl phosphate from acetate and ATP. Can also catalyze the reverse reaction. This chain is Acetate kinase, found in Nitratidesulfovibrio vulgaris (strain DP4) (Desulfovibrio vulgaris).